The following is a 203-amino-acid chain: 3-isopropylmalate dehydratase small subunit (203 aa).

The protein belongs to the LeuD family. LeuD type 1 subfamily. In terms of assembly, heterodimer of LeuC and LeuD.

The enzyme catalyses (2R,3S)-3-isopropylmalate = (2S)-2-isopropylmalate. Its pathway is amino-acid biosynthesis; L-leucine biosynthesis; L-leucine from 3-methyl-2-oxobutanoate: step 2/4. In terms of biological role, catalyzes the isomerization between 2-isopropylmalate and 3-isopropylmalate, via the formation of 2-isopropylmaleate. The protein is 3-isopropylmalate dehydratase small subunit of Rhodospirillum centenum (strain ATCC 51521 / SW).